Consider the following 675-residue polypeptide: Probable potassium transport system protein Kup (675 aa).

Transmembrane regions (helical) follow at residues 12-32, 55-75, 98-118, 143-163, 170-190, 216-236, 249-269, 296-316, 345-365, 374-394, 401-421, and 428-448; these read LGMLITLGVVYGDIGTSPLYV, VSLIFWTLMLITTVKYVLVAL, WLIFVALIGGAALLADGTLTP, WLVPLSVTLILVSLFTIQVLG, SFGPMMLLWFIVIGGIGLLNI, MGIFILGSVFLATTGAEALYS, TWPFVYAMLILNYLGQGAWML, IAMIVLATVAAIIASQALITG, IYIGAINWLLCLVTLSIVWLF, AYGLAITLTMLMTTILLSQWV, FWSLALLAGFGLLETLFLVAS, and GGYLTLGLTLMIFLIMVVWFF.

Belongs to the HAK/KUP transporter (TC 2.A.72) family.

The protein localises to the cell membrane. It catalyses the reaction K(+)(in) + H(+)(in) = K(+)(out) + H(+)(out). Its function is as follows. Transport of potassium into the cell. Likely operates as a K(+):H(+) symporter. The chain is Probable potassium transport system protein Kup from Levilactobacillus brevis (strain ATCC 367 / BCRC 12310 / CIP 105137 / JCM 1170 / LMG 11437 / NCIMB 947 / NCTC 947) (Lactobacillus brevis).